The sequence spans 313 residues: ADP-L-glycero-D-manno-heptose-6-epimerase (313 aa).

NADP(+) contacts are provided by residues 10–11 (MI), 31–32 (DN), K38, R53, 75–79 (EGACS), and N92. Y139 (proton acceptor) is an active-site residue. NADP(+) is bound at residue K143. Residue N174 participates in substrate binding. 2 residues coordinate NADP(+): V175 and K183. The active-site Proton acceptor is the K183. Substrate contacts are provided by residues S185, H192, 206–209 (FAGS), R214, and Y277.

Belongs to the NAD(P)-dependent epimerase/dehydratase family. HldD subfamily. As to quaternary structure, homopentamer. Requires NADP(+) as cofactor.

The catalysed reaction is ADP-D-glycero-beta-D-manno-heptose = ADP-L-glycero-beta-D-manno-heptose. It participates in nucleotide-sugar biosynthesis; ADP-L-glycero-beta-D-manno-heptose biosynthesis; ADP-L-glycero-beta-D-manno-heptose from D-glycero-beta-D-manno-heptose 7-phosphate: step 4/4. It functions in the pathway bacterial outer membrane biogenesis; LPS core biosynthesis. Catalyzes the interconversion between ADP-D-glycero-beta-D-manno-heptose and ADP-L-glycero-beta-D-manno-heptose via an epimerization at carbon 6 of the heptose. This chain is ADP-L-glycero-D-manno-heptose-6-epimerase, found in Vibrio vulnificus (strain CMCP6).